The sequence spans 142 residues: Thioredoxin-like protein 4A (142 aa).

A disulfide bond links cysteine 38 and cysteine 79. Serine 132 is subject to Phosphoserine.

It belongs to the DIM1 family. As to quaternary structure, component of the precatalytic spliceosome (spliceosome B complex). Component of the U5 snRNP complex. Component of the U4/U6-U5 tri-snRNP complex. The U4/U6-U5 tri-snRNP complex is a building block of the precatalytic spliceosome (spliceosome B complex). The U4/U6-U5 tri-snRNP complex is composed of the U4, U6 and U5 snRNAs and at least PRPF3, PRPF4, PRPF6, PRPF8, PRPF31, SNRNP200, TXNL4A, SNRNP40, SNRPB, SNRPD1, SNRPD2, SNRPD3, SNRPE, SNRPF, SNRPG, DDX23, CD2BP2, PPIH, SNU13, EFTUD2, SART1 and USP39, plus LSM2, LSM3, LSM4, LSM5, LSM6, LSM7 and LSM8. Directly interacts with CD2BP2. Interacts with HNRPF, HNRPH2, NEDD9 and PQBP1. Interacts with ERBB4. The disulfide bond seen in structures determined by X-ray crystallography and NMR is not essential for protein folding and function.

It is found in the nucleus. Plays a role in pre-mRNA splicing as component of the U5 snRNP and U4/U6-U5 tri-snRNP complexes that are involved in spliceosome assembly, and as component of the precatalytic spliceosome (spliceosome B complex). This is Thioredoxin-like protein 4A (TXNL4A) from Homo sapiens (Human).